The sequence spans 523 residues: Apolipoprotein N-acyltransferase (523 aa).

Helical transmembrane passes span 26-46 (LRFA…AFAP), 49-66 (WWWL…LVRQ), 74-94 (AWVG…WLYI), 109-129 (AAVL…AWLW), 137-157 (QLSG…SEWL), 185-205 (LVGV…LCAA), and 212-232 (WLAG…HTIA). The 242-residue stretch at 246–487 (LQGNVPQDVK…LGTLQADVQG (242 aa)) folds into the CN hydrolase domain. Catalysis depends on E284, which acts as the Proton acceptor. K345 is an active-site residue. C395 (nucleophile) is an active-site residue. Residues 494-514 (FVRTGNAPALGAGVLVLLAAL) form a helical membrane-spanning segment.

This sequence belongs to the CN hydrolase family. Apolipoprotein N-acyltransferase subfamily.

It localises to the cell inner membrane. It carries out the reaction N-terminal S-1,2-diacyl-sn-glyceryl-L-cysteinyl-[lipoprotein] + a glycerophospholipid = N-acyl-S-1,2-diacyl-sn-glyceryl-L-cysteinyl-[lipoprotein] + a 2-acyl-sn-glycero-3-phospholipid + H(+). It participates in protein modification; lipoprotein biosynthesis (N-acyl transfer). Its function is as follows. Catalyzes the phospholipid dependent N-acylation of the N-terminal cysteine of apolipoprotein, the last step in lipoprotein maturation. The chain is Apolipoprotein N-acyltransferase from Ralstonia nicotianae (strain ATCC BAA-1114 / GMI1000) (Ralstonia solanacearum).